Consider the following 527-residue polypeptide: uncharacterized protein (527 aa).

Disordered stretches follow at residues 1 to 49 (MSSF…IKDE), 99 to 307 (DFNF…ATTT), 319 to 353 (TEIN…EDEN), and 382 to 419 (YINN…QQQE). A compositionally biased stretch (acidic residues) spans 8–17 (YDDESEEEDN). Low complexity-rich tracts occupy residues 18–44 (NNNN…NSNN) and 99–115 (DFNF…NSNN). Over residues 141–150 (NEFRNPDLKN) the composition is skewed to basic and acidic residues. 2 stretches are compositionally biased toward low complexity: residues 167 to 178 (SSQNTTTTQQSS) and 186 to 222 (NNNN…NSNN). Residues 229–248 (DDKSKKINENENTVNKKDNI) are compositionally biased toward basic and acidic residues. Residues 283–296 (LRKKLLKNQPKTKK) are compositionally biased toward basic residues. Composition is skewed to low complexity over residues 297–307 (STTTTTTATTT) and 319–330 (TEINNNNSNSNN). Residues 386 to 410 (DDGDDDDDDDENENENDSQPEEEYE) are compositionally biased toward acidic residues.

This is an uncharacterized protein from Dictyostelium discoideum (Social amoeba).